A 91-amino-acid chain; its full sequence is Small ribosomal subunit protein bS20 (91 aa).

The interval 1-26 (MANLKSSKKDIRRTARRKERNGEDRT) is disordered.

Belongs to the bacterial ribosomal protein bS20 family.

In terms of biological role, binds directly to 16S ribosomal RNA. The polypeptide is Small ribosomal subunit protein bS20 (Leptospira biflexa serovar Patoc (strain Patoc 1 / Ames)).